The chain runs to 326 residues: Regulation of nuclear pre-mRNA domain-containing protein 1B (326 aa).

S2 bears the N-acetylserine mark. The region spanning 2–133 (SSFSESALEK…QLKLSMEDSK (132 aa)) is the CID domain. Positions 128–144 (SMEDSKSPPPKAAEEKK) are enriched in basic and acidic residues. The tract at residues 128–148 (SMEDSKSPPPKAAEEKKSLKR) is disordered. Residues S132 and S134 each carry the phosphoserine modification. Y161 is subject to Phosphotyrosine. S166 and S299 each carry phosphoserine.

This sequence belongs to the UPF0400 (RTT103) family. As to quaternary structure, homodimer. May form a heterodimer with RPRD1A. Associates with RPAP2. Associates with the RNA polymerase II complex. Widely expressed in the adult with highest levels in liver, colon, prostate and uterus and lowest levels in heart and kidney. Not detected in rectum.

It localises to the nucleus. In terms of biological role, interacts with phosphorylated C-terminal heptapeptide repeat domain (CTD) of the largest RNA polymerase II subunit POLR2A, and participates in dephosphorylation of the CTD by RPAP2. Transcriptional regulator which enhances expression of CCND1. Promotes binding of RNA polymerase II to the CCDN1 promoter and to the termination region before the poly-A site but decreases its binding after the poly-A site. Prevents RNA polymerase II from reading through the 3' end termination site and may allow it to be recruited back to the promoter through promotion of the formation of a chromatin loop. Also enhances the transcription of a number of other cell cycle-related genes including CDK2, CDK4, CDK6 and cyclin-E but not CDKN1A, CDKN1B or cyclin-A. Promotes cell proliferation. The polypeptide is Regulation of nuclear pre-mRNA domain-containing protein 1B (Rprd1b) (Mus musculus (Mouse)).